We begin with the raw amino-acid sequence, 336 residues long: Formimidoylglutamase (336 aa).

Positions 1-10 are enriched in polar residues; the sequence is MNPNFTTEHT. The disordered stretch occupies residues 1-22; sequence MNPNFTTEHTWQGRHDPEDGQA. Residues 11-22 are compositionally biased toward basic and acidic residues; sequence WQGRHDPEDGQA. The Mn(2+) site is built by H127, D157, H159, D161, D254, and D256.

Belongs to the arginase family. Mn(2+) serves as cofactor.

It carries out the reaction N-formimidoyl-L-glutamate + H2O = formamide + L-glutamate. The protein operates within amino-acid degradation; L-histidine degradation into L-glutamate; L-glutamate from N-formimidoyl-L-glutamate (hydrolase route): step 1/1. Its function is as follows. Catalyzes the conversion of N-formimidoyl-L-glutamate to L-glutamate and formamide. The sequence is that of Formimidoylglutamase from Vibrio cholerae serotype O1 (strain ATCC 39541 / Classical Ogawa 395 / O395).